The following is a 313-amino-acid chain: 4-hydroxy-3-methylbut-2-enyl diphosphate reductase (313 aa).

Cysteine 20 contributes to the [4Fe-4S] cluster binding site. Histidine 49 and histidine 82 together coordinate (2E)-4-hydroxy-3-methylbut-2-enyl diphosphate. 2 residues coordinate dimethylallyl diphosphate: histidine 49 and histidine 82. Positions 49 and 82 each coordinate isopentenyl diphosphate. Position 104 (cysteine 104) interacts with [4Fe-4S] cluster. Histidine 132 provides a ligand contact to (2E)-4-hydroxy-3-methylbut-2-enyl diphosphate. Histidine 132 contributes to the dimethylallyl diphosphate binding site. Histidine 132 contributes to the isopentenyl diphosphate binding site. The active-site Proton donor is the glutamate 134. (2E)-4-hydroxy-3-methylbut-2-enyl diphosphate is bound at residue threonine 172. Cysteine 201 is a [4Fe-4S] cluster binding site. The (2E)-4-hydroxy-3-methylbut-2-enyl diphosphate site is built by serine 229, serine 230, asparagine 231, and serine 273. Residues serine 229, serine 230, asparagine 231, and serine 273 each coordinate dimethylallyl diphosphate. Residues serine 229, serine 230, asparagine 231, and serine 273 each coordinate isopentenyl diphosphate.

Belongs to the IspH family. [4Fe-4S] cluster is required as a cofactor.

It catalyses the reaction isopentenyl diphosphate + 2 oxidized [2Fe-2S]-[ferredoxin] + H2O = (2E)-4-hydroxy-3-methylbut-2-enyl diphosphate + 2 reduced [2Fe-2S]-[ferredoxin] + 2 H(+). It carries out the reaction dimethylallyl diphosphate + 2 oxidized [2Fe-2S]-[ferredoxin] + H2O = (2E)-4-hydroxy-3-methylbut-2-enyl diphosphate + 2 reduced [2Fe-2S]-[ferredoxin] + 2 H(+). It functions in the pathway isoprenoid biosynthesis; dimethylallyl diphosphate biosynthesis; dimethylallyl diphosphate from (2E)-4-hydroxy-3-methylbutenyl diphosphate: step 1/1. It participates in isoprenoid biosynthesis; isopentenyl diphosphate biosynthesis via DXP pathway; isopentenyl diphosphate from 1-deoxy-D-xylulose 5-phosphate: step 6/6. Its function is as follows. Catalyzes the conversion of 1-hydroxy-2-methyl-2-(E)-butenyl 4-diphosphate (HMBPP) into a mixture of isopentenyl diphosphate (IPP) and dimethylallyl diphosphate (DMAPP). Acts in the terminal step of the DOXP/MEP pathway for isoprenoid precursor biosynthesis. The polypeptide is 4-hydroxy-3-methylbut-2-enyl diphosphate reductase (Desulfotalea psychrophila (strain LSv54 / DSM 12343)).